Here is a 159-residue protein sequence, read N- to C-terminus: Regulatory protein RecX (159 aa).

This sequence belongs to the RecX family.

It localises to the cytoplasm. Functionally, modulates RecA activity. This is Regulatory protein RecX from Acinetobacter baylyi (strain ATCC 33305 / BD413 / ADP1).